A 111-amino-acid polypeptide reads, in one-letter code: Universal stress protein B (111 aa).

A run of 2 helical transmembrane segments spans residues 1-21 (MINT…NMLR) and 90-110 (FILT…LMLW).

Belongs to the universal stress protein B family.

It is found in the cell inner membrane. This Edwardsiella ictaluri (strain 93-146) protein is Universal stress protein B.